A 71-amino-acid chain; its full sequence is Putative membrane protein insertion efficiency factor (71 aa).

This sequence belongs to the UPF0161 family.

Its subcellular location is the cell membrane. In terms of biological role, could be involved in insertion of integral membrane proteins into the membrane. This Clostridium acetobutylicum (strain ATCC 824 / DSM 792 / JCM 1419 / IAM 19013 / LMG 5710 / NBRC 13948 / NRRL B-527 / VKM B-1787 / 2291 / W) protein is Putative membrane protein insertion efficiency factor.